The primary structure comprises 110 residues: Ribonuclease P protein component 4 (110 aa).

The Zn(2+) site is built by Cys65, Cys68, Cys94, and Cys97.

Belongs to the eukaryotic/archaeal RNase P protein component 4 family. Consists of a catalytic RNA component and at least 5 protein subunits. Zn(2+) serves as cofactor.

The protein localises to the cytoplasm. It carries out the reaction Endonucleolytic cleavage of RNA, removing 5'-extranucleotides from tRNA precursor.. Functionally, part of ribonuclease P, a protein complex that generates mature tRNA molecules by cleaving their 5'-ends. This chain is Ribonuclease P protein component 4, found in Methanococcus maripaludis (strain DSM 14266 / JCM 13030 / NBRC 101832 / S2 / LL).